Here is a 72-residue protein sequence, read N- to C-terminus: Translation initiation factor IF-1 (72 aa).

One can recognise an S1-like domain in the interval 1-72 (MTKEDNIEMQ…TKGRIIFRSR (72 aa)).

Belongs to the IF-1 family. In terms of assembly, component of the 30S ribosomal translation pre-initiation complex which assembles on the 30S ribosome in the order IF-2 and IF-3, IF-1 and N-formylmethionyl-tRNA(fMet); mRNA recruitment can occur at any time during PIC assembly.

It localises to the cytoplasm. One of the essential components for the initiation of protein synthesis. Stabilizes the binding of IF-2 and IF-3 on the 30S subunit to which N-formylmethionyl-tRNA(fMet) subsequently binds. Helps modulate mRNA selection, yielding the 30S pre-initiation complex (PIC). Upon addition of the 50S ribosomal subunit IF-1, IF-2 and IF-3 are released leaving the mature 70S translation initiation complex. This Buchnera aphidicola subsp. Schizaphis graminum (strain Sg) protein is Translation initiation factor IF-1.